We begin with the raw amino-acid sequence, 204 residues long: Thiamine-phosphate synthase (204 aa).

4-amino-2-methyl-5-(diphosphooxymethyl)pyrimidine-binding positions include 32 to 36 (QLRMK) and Asp64. Mg(2+) contacts are provided by Asp65 and Asp84. Thr103 lines the 4-amino-2-methyl-5-(diphosphooxymethyl)pyrimidine pocket. A 2-[(2R,5Z)-2-carboxy-4-methylthiazol-5(2H)-ylidene]ethyl phosphate-binding site is contributed by 129–131 (TTT). Residue Lys132 participates in 4-amino-2-methyl-5-(diphosphooxymethyl)pyrimidine binding. Gly165 contributes to the 2-[(2R,5Z)-2-carboxy-4-methylthiazol-5(2H)-ylidene]ethyl phosphate binding site.

This sequence belongs to the thiamine-phosphate synthase family. Mg(2+) serves as cofactor.

It catalyses the reaction 2-[(2R,5Z)-2-carboxy-4-methylthiazol-5(2H)-ylidene]ethyl phosphate + 4-amino-2-methyl-5-(diphosphooxymethyl)pyrimidine + 2 H(+) = thiamine phosphate + CO2 + diphosphate. The catalysed reaction is 2-(2-carboxy-4-methylthiazol-5-yl)ethyl phosphate + 4-amino-2-methyl-5-(diphosphooxymethyl)pyrimidine + 2 H(+) = thiamine phosphate + CO2 + diphosphate. It carries out the reaction 4-methyl-5-(2-phosphooxyethyl)-thiazole + 4-amino-2-methyl-5-(diphosphooxymethyl)pyrimidine + H(+) = thiamine phosphate + diphosphate. Its pathway is cofactor biosynthesis; thiamine diphosphate biosynthesis; thiamine phosphate from 4-amino-2-methyl-5-diphosphomethylpyrimidine and 4-methyl-5-(2-phosphoethyl)-thiazole: step 1/1. In terms of biological role, condenses 4-methyl-5-(beta-hydroxyethyl)thiazole monophosphate (THZ-P) and 2-methyl-4-amino-5-hydroxymethyl pyrimidine pyrophosphate (HMP-PP) to form thiamine monophosphate (TMP). This is Thiamine-phosphate synthase from Bacteroides fragilis (strain ATCC 25285 / DSM 2151 / CCUG 4856 / JCM 11019 / LMG 10263 / NCTC 9343 / Onslow / VPI 2553 / EN-2).